Consider the following 122-residue polypeptide: Large ribosomal subunit protein bL12 (122 aa).

This sequence belongs to the bacterial ribosomal protein bL12 family. In terms of assembly, homodimer. Part of the ribosomal stalk of the 50S ribosomal subunit. Forms a multimeric L10(L12)X complex, where L10 forms an elongated spine to which 2 to 4 L12 dimers bind in a sequential fashion. Binds GTP-bound translation factors.

In terms of biological role, forms part of the ribosomal stalk which helps the ribosome interact with GTP-bound translation factors. Is thus essential for accurate translation. The chain is Large ribosomal subunit protein bL12 from Myxococcus xanthus (strain DK1622).